The chain runs to 1075 residues: Putative type I restriction enzyme MjaVIIP endonuclease subunit (1075 aa).

It belongs to the HsdR family. In terms of assembly, the type I restriction/modification system is composed of three polypeptides R, M and S.

It carries out the reaction Endonucleolytic cleavage of DNA to give random double-stranded fragments with terminal 5'-phosphates, ATP is simultaneously hydrolyzed.. Its function is as follows. The restriction (R) subunit of a type I restriction enzyme that recognizes 5'-CAAN(7)TGG-3' and cleaves a random distance away. The R subunit is required for both endonuclease and ATPase activities but not for modification. After locating a non-methylated recognition site, the enzyme complex serves as a molecular motor that translocates DNA in an ATP-dependent manner until a collision occurs that triggers cleavage. The polypeptide is Putative type I restriction enzyme MjaVIIP endonuclease subunit (Methanocaldococcus jannaschii (strain ATCC 43067 / DSM 2661 / JAL-1 / JCM 10045 / NBRC 100440) (Methanococcus jannaschii)).